A 454-amino-acid chain; its full sequence is Zinc finger CCCH domain-containing protein 66 (454 aa).

The segment covering 1 to 23 (MAAGAGAGGGGGEGDSNGGGTSP) has biased composition (gly residues). The segment at 1–30 (MAAGAGAGGGGGEGDSNGGGTSPGGVSAAA) is disordered. 5 C3H1-type zinc fingers span residues 66–94 (RIGEPDCSYYMRTGLCRFGMTCKFNHPPN), 111–139 (RVGQPECQYYLKTGTCKFGATCKFHHPRE), 157–185 (RPNEKECAYYLRTGQCKFASTCKFHHPQP), 318–346 (RPDQPECQFYMKTGDCKFGAVCKFHHPKE), and 364–392 (RPGEPVCTFYSRYGICKFGPNCKFDHPMG). Residues 405–454 (DVSSMHYQLSPSPGHPGILLDGGSGRSHRVPQSDSQQIPSGDGNAEREAS) form a disordered region. The segment covering 434–443 (VPQSDSQQIP) has biased composition (polar residues).

The protein is Zinc finger CCCH domain-containing protein 66 of Oryza sativa subsp. japonica (Rice).